A 380-amino-acid chain; its full sequence is Methenyltetrahydrofolate synthase domain-containing protein (380 aa).

Residues 245–258 show a composition bias toward basic and acidic residues; that stretch reads EEQAGKDVTLRDGP. Disordered stretches follow at residues 245–283 and 361–380; these read EEQAGKDVTLRDGPRSPPGATRSPRDLAPPELGSVPLSS and LVGSHTAEPLPDHQPAIAGP. Residues 282-355 enclose the RRM domain; the sequence is SSVQIGNLPR…NTVRVVLARQ (74 aa).

The protein is Methenyltetrahydrofolate synthase domain-containing protein (MTHFSD) of Bos taurus (Bovine).